The following is a 174-amino-acid chain: ATP-dependent protease subunit HslV (174 aa).

Thr2 is an active-site residue. Gly157, Cys160, and Thr163 together coordinate Na(+).

Belongs to the peptidase T1B family. HslV subfamily. In terms of assembly, a double ring-shaped homohexamer of HslV is capped on each side by a ring-shaped HslU homohexamer. The assembly of the HslU/HslV complex is dependent on binding of ATP.

It localises to the cytoplasm. The enzyme catalyses ATP-dependent cleavage of peptide bonds with broad specificity.. With respect to regulation, allosterically activated by HslU binding. Protease subunit of a proteasome-like degradation complex believed to be a general protein degrading machinery. The sequence is that of ATP-dependent protease subunit HslV from Shewanella putrefaciens (strain CN-32 / ATCC BAA-453).